The primary structure comprises 383 residues: Corticosteroid-binding globulin (383 aa).

N-linked (GlcNAc...) asparagine glycosylation is found at Asn74 and Asn154. Gln232 contributes to the cortisol binding site. Residue Asn238 is glycosylated (N-linked (GlcNAc...) asparagine). Residue Gln264 coordinates cortisol. Asn308 is a glycosylation site (N-linked (GlcNAc...) asparagine). Trp371 contributes to the cortisol binding site.

The protein belongs to the serpin family. In terms of tissue distribution, produced and secreted by hepatocytes, but has also been identified in a number of glycocorticoid responsive cells (it is found in maternal lung, spleen, and ovary and fetal kidney).

It is found in the secreted. In terms of biological role, major transport protein for glucocorticoids and progestins in the blood of almost all vertebrate species. The chain is Corticosteroid-binding globulin (SERPINA6) from Oryctolagus cuniculus (Rabbit).